A 144-amino-acid chain; its full sequence is Transcription antitermination protein NusB (144 aa).

This sequence belongs to the NusB family.

In terms of biological role, involved in transcription antitermination. Required for transcription of ribosomal RNA (rRNA) genes. Binds specifically to the boxA antiterminator sequence of the ribosomal RNA (rrn) operons. The polypeptide is Transcription antitermination protein NusB (Haemophilus influenzae (strain 86-028NP)).